The primary structure comprises 176 residues: Large ribosomal subunit protein uL10 (176 aa).

The protein belongs to the universal ribosomal protein uL10 family. As to quaternary structure, part of the ribosomal stalk of the 50S ribosomal subunit. The N-terminus interacts with L11 and the large rRNA to form the base of the stalk. The C-terminus forms an elongated spine to which L12 dimers bind in a sequential fashion forming a multimeric L10(L12)X complex.

Functionally, forms part of the ribosomal stalk, playing a central role in the interaction of the ribosome with GTP-bound translation factors. The chain is Large ribosomal subunit protein uL10 from Leuconostoc citreum (strain KM20).